The sequence spans 585 residues: ATP-dependent lipid A-core flippase (585 aa).

5 helical membrane passes run 16-36 (LWPY…ALII), 66-86 (FLSM…ASGF), 156-176 (IIGL…ILLV), 252-272 (AIAN…VLVL), and 278-298 (LRAE…FGLM). The 285-residue stretch at 29–313 (VAVVALIINA…LTNVTSQFQR (285 aa)) folds into the ABC transmembrane type-1 domain. Residues 345–581 (IQVKNVTFTY…DGAYAQLHRI (237 aa)) enclose the ABC transporter domain. 379-386 (GRSGSGKS) is a binding site for ATP.

Belongs to the ABC transporter superfamily. Lipid exporter (TC 3.A.1.106) family. As to quaternary structure, homodimer.

Its subcellular location is the cell inner membrane. It carries out the reaction ATP + H2O + lipid A-core oligosaccharideSide 1 = ADP + phosphate + lipid A-core oligosaccharideSide 2.. Involved in lipopolysaccharide (LPS) biosynthesis. Translocates lipid A-core from the inner to the outer leaflet of the inner membrane. Transmembrane domains (TMD) form a pore in the inner membrane and the ATP-binding domain (NBD) is responsible for energy generation. This Photobacterium profundum (strain SS9) protein is ATP-dependent lipid A-core flippase.